A 382-amino-acid polypeptide reads, in one-letter code: D-galactonate dehydratase (382 aa).

D183 provides a ligand contact to Mg(2+). Catalysis depends on H185, which acts as the Proton donor. Mg(2+)-binding residues include E209 and E235. The active-site Proton acceptor is the H285.

It belongs to the mandelate racemase/muconate lactonizing enzyme family. GalD subfamily. Requires Mg(2+) as cofactor.

The catalysed reaction is D-galactonate = 2-dehydro-3-deoxy-D-galactonate + H2O. Its pathway is carbohydrate acid metabolism; D-galactonate degradation; D-glyceraldehyde 3-phosphate and pyruvate from D-galactonate: step 1/3. In terms of biological role, catalyzes the dehydration of D-galactonate to 2-keto-3-deoxy-D-galactonate. The chain is D-galactonate dehydratase from Xanthomonas campestris pv. campestris (strain 8004).